A 373-amino-acid polypeptide reads, in one-letter code: Leucine aminopeptidase 1 (373 aa).

The first 18 residues, 1–18, serve as a signal peptide directing secretion; that stretch reads MKFISVLALGATATSVLG. Residues H176 and D195 each coordinate Zn(2+). Residue N196 is glycosylated (N-linked (GlcNAc...) asparagine). The Zn(2+) site is built by E234 and D261. An N-linked (GlcNAc...) asparagine glycan is attached at N286. C310 and C314 are disulfide-bonded. H343 contacts Zn(2+).

It belongs to the peptidase M28 family. M28E subfamily. As to quaternary structure, monomer. Requires Zn(2+) as cofactor.

It localises to the secreted. Its function is as follows. Extracellular aminopeptidase which contributes to pathogenicity. This Arthroderma otae (strain ATCC MYA-4605 / CBS 113480) (Microsporum canis) protein is Leucine aminopeptidase 1 (LAP1).